The sequence spans 259 residues: Acetylglutamate kinase (259 aa).

Substrate-binding positions include 46–47 (GG), R68, and N162.

The protein belongs to the acetylglutamate kinase family. ArgB subfamily.

The protein resides in the cytoplasm. The catalysed reaction is N-acetyl-L-glutamate + ATP = N-acetyl-L-glutamyl 5-phosphate + ADP. It participates in amino-acid biosynthesis; L-arginine biosynthesis; N(2)-acetyl-L-ornithine from L-glutamate: step 2/4. Functionally, catalyzes the ATP-dependent phosphorylation of N-acetyl-L-glutamate. This Roseiflexus castenholzii (strain DSM 13941 / HLO8) protein is Acetylglutamate kinase.